A 411-amino-acid chain; its full sequence is 2,3-bisphosphoglycerate-independent phosphoglycerate mutase (411 aa).

It belongs to the BPG-independent phosphoglycerate mutase family. A-PGAM subfamily.

The enzyme catalyses (2R)-2-phosphoglycerate = (2R)-3-phosphoglycerate. It participates in carbohydrate degradation; glycolysis; pyruvate from D-glyceraldehyde 3-phosphate: step 3/5. Catalyzes the interconversion of 2-phosphoglycerate and 3-phosphoglycerate. The sequence is that of 2,3-bisphosphoglycerate-independent phosphoglycerate mutase from Pyrobaculum aerophilum (strain ATCC 51768 / DSM 7523 / JCM 9630 / CIP 104966 / NBRC 100827 / IM2).